The chain runs to 504 residues: Apoptosis inhibitor 5 (504 aa).

The ARM-like and Heat-like helical repeats stretch occupies residues 1–360; sequence MPTVEELYRN…HQLGRKLPDF (360 aa). Lys251 is modified (N6-acetyllysine). Residues 370-391 form a leucine-zipper region; it reads LKDFKIRLQYFARGLQVYIRQL. At Thr399 the chain carries Phosphothreonine. The segment at 452 to 504 is disordered; sequence GQKRTSEDTSSGSPPKKSPGGPKRDARQIYNPPSGKYSSNLSNFNYERSLQGK. Positions 454 to 475 match the Nuclear localization signal motif; sequence KRTSEDTSSGSPPKKSPGGPKR. Positions 461-472 are enriched in low complexity; that stretch reads SSGSPPKKSPGG. Ser462, Ser464, and Ser469 each carry phosphoserine. The segment covering 487–504 has biased composition (polar residues); the sequence is KYSSNLSNFNYERSLQGK.

It belongs to the API5 family. Monomer. Interacts with FGF2 and ACIN1. In terms of processing, acetylation at Lys-251 impairs antiapoptotic function.

The protein resides in the nucleus. It localises to the cytoplasm. In terms of biological role, antiapoptotic factor that may have a role in protein assembly. Negatively regulates ACIN1. By binding to ACIN1, it suppresses ACIN1 cleavage from CASP3 and ACIN1-mediated DNA fragmentation. Also known to efficiently suppress E2F1-induced apoptosis. The protein is Apoptosis inhibitor 5 (Api5) of Mus musculus (Mouse).